A 331-amino-acid chain; its full sequence is Cysteine and histidine-rich domain-containing protein 1 (331 aa).

A2 is modified (N-acetylalanine). The interval 2 to 77 (ALLCYNRGCG…KPPEPVKPEV (76 aa)) is interaction with PPP5C. Positions 5, 10, 24, 27, 42, and 43 each coordinate Zn(2+). CHORD domains are found at residues 5–64 (CYNR…KGRH) and 157–216 (CKNG…RGKH). T47 carries the phosphothreonine modification. S51 carries the post-translational modification Phosphoserine. The Zn(2+) site is built by C59, H64, C157, C162, C176, H179, C194, C195, C211, and H216. Residues 62 to 82 (GRHNSEKPPEPVKPEVKTTEK) are disordered. Residues 64–82 (HNSEKPPEPVKPEVKTTEK) show a composition bias toward basic and acidic residues. The interval 65-316 (NSEKPPEPVK…AEPMQWASLE (252 aa)) is interaction with HSP90AA1 and HSP90AB1. The 90-residue stretch at 227-316 (VVPCRHDWHQ…AEPMQWASLE (90 aa)) folds into the CS domain.

Interacts with HSP90AA1, HSP90AB1, PPP5C, ROCK1 and ROCK2.

Its function is as follows. Regulates centrosome duplication, probably by inhibiting the kinase activity of ROCK2. Proposed to act as co-chaperone for HSP90. May play a role in the regulation of NOD1 via a HSP90 chaperone complex. In vitro, has intrinsic chaperone activity. This function may be achieved by inhibiting association of ROCK2 with NPM1. Plays a role in ensuring the localization of the tyrosine kinase receptor EGFR to the plasma membrane, and thus ensures the subsequent regulation of EGFR activity and EGF-induced actin cytoskeleton remodeling. Involved in stress response. Prevents tumorigenesis. This is Cysteine and histidine-rich domain-containing protein 1 (Chordc1) from Rattus norvegicus (Rat).